The sequence spans 216 residues: Ras-related protein Rab-11A (216 aa).

The residue at position 2 (glycine 2) is an N-acetylglycine. Residues serine 20, glycine 21, valine 22, glycine 23, lysine 24, serine 25, asparagine 26, asparagine 37, leucine 38, serine 40, serine 42, and threonine 43 each contribute to the GTP site. Serine 25 provides a ligand contact to Mg(2+). The Switch 1 signature appears at 36-47; that stretch reads FNLESKSTIGVE. Mg(2+) contacts are provided by threonine 43 and aspartate 66. A Switch 2 motif is present at residues 67-86; sequence TAGQERYRAITSAYYRGAVG. Residues glycine 69, asparagine 124, lysine 125, aspartate 127, alanine 155, and leucine 156 each contribute to the GTP site. The tract at residues 183–211 is disordered; the sequence is DRRENDMSPSNNVVPIHVPPTTENKPKVQ. S-geranylgeranyl cysteine attachment occurs at residues cysteine 212 and cysteine 213. Cysteine 213 carries the cysteine methyl ester modification. Residues 214–216 constitute a propeptide, removed in mature form; the sequence is QNI.

This sequence belongs to the small GTPase superfamily. Rab family. As to quaternary structure, interacts (GTP-bound form) with RAB11FIPs (via their C-termini) including RAB11FIP1, RAB11FIP2, RAB11FIP3, RAB11FIP4 and RAB11FIP5 effectors. Forms a complex with RAB11FIP3 and dynein intermediate chain DYNC1LI1; the interaction between RAB11A1 and RAB11FIP3 is direct; the complex regulates endocytic trafficking. Interacts with EVI5; EVI5 and RAB11FIP3 may be mutually exclusive and compete for binding RAB11A. Interacts with SGSM1, SGSM2, SGSM3 and VIPAS39. Interacts with EXOC6 in a GTP-dependent manner. Interacts with RAB11FIP5. Interacts with STXBP6. Interacts (GDP-bound form) with ZFYVE27. Interacts with BIRC6/bruce. May interact with TBC1D14. Interacts with UNC119; in a cell cycle-dependent manner. GDP-bound and nucleotide-free forms interact with SH3BP5. Interacts (GDP-bound form) with KIF5A in a ZFYVE27-dependent manner. Interacts (GDP-bound form) with RELCH. Found in a complex composed of RELCH, OSBP1 and RAB11A. Interacts with TBC1D12. Interacts with DEF6. Interacts with ATP9A. Forms a heterotetramer with RAB11FIP3; the GTP-bound form is preferred for binding. Forms a complex with Rabin8/RAB3IP and RAB11FIP3, probably a heterohexamer with two of each protein subunit, where Rabin8/RAB3IP and RAB11FIP3 simultaneously bind to RAB11A; the complex promotes preciliary trafficking and cilia growth. Forms a complex containing RAB11A, ASAP1, Rabin8/RAB3IP, RAP11FIP3 and ARF4; the complex promotes preciliary trafficking; the complex binds to RHO in photoreceptor cells and promotes RHO ciliary transport. Interacts (GTP-bound form) with WDR44; the interaction prevents RAB11A-RAB3IP-RAB11FIP3 complex formation. Requires Mg(2+) as cofactor. In terms of tissue distribution, detected in various tissues, such as brain, testis, spleen, and heart.

The protein resides in the cell membrane. It localises to the endosome membrane. It is found in the recycling endosome membrane. Its subcellular location is the cleavage furrow. The protein localises to the cytoplasmic vesicle. The protein resides in the phagosome. It localises to the cytoplasmic vesicle membrane. It is found in the golgi apparatus. Its subcellular location is the trans-Golgi network. It carries out the reaction GTP + H2O = GDP + phosphate + H(+). With respect to regulation, regulated by guanine nucleotide exchange factors (GEFs) which promote the exchange of bound GDP for free GTP. Regulated by GTPase activating proteins (GAPs) which increase the GTP hydrolysis activity. Inhibited by GDP dissociation inhibitors (GDIs) which prevent Rab-GDP dissociation. The small GTPases Rab are key regulators of intracellular membrane trafficking, from the formation of transport vesicles to their fusion with membranes. Rabs cycle between an inactive GDP-bound form and an active GTP-bound form that is able to recruit to membranes different set of downstream effectors directly responsible for vesicle formation, movement, tethering and fusion. The small Rab GTPase RAB11A regulates endocytic recycling. Forms a functional Rab11/RAB11FIP3/dynein complex that regulates the movement of peripheral sorting endosomes (SE) along microtubule tracks toward the microtubule organizing center/centrosome, generating the endosomal recycling compartment (ERC). Acts as a major regulator of membrane delivery during cytokinesis. Together with MYO5B and RAB8A participates in epithelial cell polarization. Together with Rabin8/RAB3IP, RAB8A, the exocyst complex, PARD3, PRKCI, ANXA2, CDC42 and DNMBP promotes transcytosis of PODXL to the apical membrane initiation sites (AMIS), apical surface formation and lumenogenesis. Together with MYO5B participates in CFTR trafficking to the plasma membrane and TF (Transferrin) recycling in nonpolarized cells. Required in a complex with MYO5B and RAB11FIP2 for the transport of NPC1L1 to the plasma membrane. Participates in the sorting and basolateral transport of CDH1 from the Golgi apparatus to the plasma membrane. Regulates the recycling of FCGRT (receptor of Fc region of monomeric IgG) to basolateral membranes. May also play a role in melanosome transport and release from melanocytes. Promotes Rabin8/RAB3IP preciliary vesicular trafficking to mother centriole by forming a ciliary targeting complex containing Rab11, ASAP1, Rabin8/RAB3IP, RAB11FIP3 and ARF4, thereby regulating ciliogenesis initiation. On the contrary, upon LPAR1 receptor signaling pathway activation, interaction with phosphorylated WDR44 prevents Rab11-RAB3IP-RAB11FIP3 complex formation and cilia growth. Participates in the export of a subset of neosynthesized proteins through a Rab8-Rab10-Rab11-endososomal dependent export route via interaction with WDR44. The polypeptide is Ras-related protein Rab-11A (Rattus norvegicus (Rat)).